Consider the following 179-residue polypeptide: Putative BPIFA4P protein (179 aa).

Positions 1–20 (MLNVSGLFVLLCGLLVSSSA) are cleaved as a signal peptide.

This sequence belongs to the BPI/LBP/Plunc superfamily. Plunc family. As to expression, expressed in breast cancer and salivary gland.

Its subcellular location is the secreted. Major protein in sweat, has surfactant properties. This chain is Putative BPIFA4P protein (BPIFA4P), found in Homo sapiens (Human).